Reading from the N-terminus, the 212-residue chain is Ribosomal RNA large subunit methyltransferase E (212 aa).

The segment covering 1-10 (MATCRRRRRG) has biased composition (basic residues). The segment at 1 to 24 (MATCRRRRRGCNSQARRSRHESDP) is disordered. The S-adenosyl-L-methionine site is built by Gly-66, Trp-68, Asp-86, Asp-102, and Asp-127. Lys-167 acts as the Proton acceptor in catalysis.

The protein belongs to the class I-like SAM-binding methyltransferase superfamily. RNA methyltransferase RlmE family.

The protein localises to the cytoplasm. It catalyses the reaction uridine(2552) in 23S rRNA + S-adenosyl-L-methionine = 2'-O-methyluridine(2552) in 23S rRNA + S-adenosyl-L-homocysteine + H(+). Its function is as follows. Specifically methylates the uridine in position 2552 of 23S rRNA at the 2'-O position of the ribose in the fully assembled 50S ribosomal subunit. This Halorhodospira halophila (strain DSM 244 / SL1) (Ectothiorhodospira halophila (strain DSM 244 / SL1)) protein is Ribosomal RNA large subunit methyltransferase E.